The sequence spans 179 residues: Alpha-S2-casein-like A (179 aa).

Positions 1 to 15 (MKFFIFTCLVAAALA) are cleaved as a signal peptide. 2 positions are modified to phosphoserine: Ser-24 and Ser-25. Residues 44–121 (FQTPQDSASS…NAIYDVPSQE (78 aa)) form a disordered region. Residues 63-74 (ISEKIEQSEEQK) are compositionally biased toward basic and acidic residues. Positions 93–110 (PQICTPYQQQSSVNQRPQ) are enriched in polar residues.

Belongs to the alpha-casein family. In terms of tissue distribution, mammary gland specific. Secreted in milk.

The protein resides in the secreted. In terms of biological role, important role in the capacity of milk to transport calcium phosphate. In Rattus norvegicus (Rat), this protein is Alpha-S2-casein-like A (Csn1s2a).